We begin with the raw amino-acid sequence, 321 residues long: Digestive cysteine proteinase 3 (321 aa).

The signal sequence occupies residues 1 to 16 (MKVAALFLCGLALATA). Positions 17–106 (SPSWDHFKTQ…AVFTAEAGPM (90 aa)) are cleaved as a propeptide — activation peptide. Intrachain disulfides connect cysteine 127-cysteine 170, cysteine 161-cysteine 203, and cysteine 261-cysteine 310. The active site involves cysteine 130. Residues histidine 268 and asparagine 288 contribute to the active site.

It belongs to the peptidase C1 family.

Inhibited by E-64, antipain, leupeptin, heavy metal ions, iodoacetic acid, dithionitrobenzene, p-hydroxymercuri-benzoate; activated by mercaptoethanol and dithiothreitol. The sequence is that of Digestive cysteine proteinase 3 (LCP3) from Homarus americanus (American lobster).